Here is a 197-residue protein sequence, read N- to C-terminus: Recombination protein RecR (197 aa).

Residues 56–71 form a C4-type zinc finger; it reads CHVCGNYCESDTCNIC. In terms of domain architecture, Toprim spans 79–174; sequence RIICVVEESK…KITKLASGIP (96 aa).

Belongs to the RecR family.

Its function is as follows. May play a role in DNA repair. It seems to be involved in an RecBC-independent recombinational process of DNA repair. It may act with RecF and RecO. The polypeptide is Recombination protein RecR (Fusobacterium nucleatum subsp. nucleatum (strain ATCC 25586 / DSM 15643 / BCRC 10681 / CIP 101130 / JCM 8532 / KCTC 2640 / LMG 13131 / VPI 4355)).